The following is a 248-amino-acid chain: Peroxisomal membrane protein 11A (248 aa).

The Cytoplasmic segment spans residues 1 to 97; sequence MATKAPEKIT…RSSRWDSNHE (97 aa). The chain crosses the membrane as a helical span at residues 98–118; sequence LVLLIIAYGGEGLYYFVEQFI. Topologically, residues 119 to 220 are lumenal; that stretch reads WLTKSGLIDA…MTIADIRDGK (102 aa). A helical transmembrane segment spans residues 221–241; sequence GVLSAPNVISSAGLFSAIVST. The Cytoplasmic segment spans residues 242–248; the sequence is HKNWISC.

Belongs to the peroxin-11 family. Homooligomer. Interacts with ARC5 and FIS1B on peroxisomes. As to expression, expressed in developing siliques.

It localises to the peroxisome membrane. In terms of biological role, involved in peroxisomal proliferation. Promotes peroxisomal duplication, aggregation or elongation without fission. The sequence is that of Peroxisomal membrane protein 11A (PEX11A) from Arabidopsis thaliana (Mouse-ear cress).